Reading from the N-terminus, the 158-residue chain is tRNA (cytidine(34)-2'-O)-methyltransferase (158 aa).

3 residues coordinate S-adenosyl-L-methionine: Gly103, Ile123, and Ser131.

Belongs to the class IV-like SAM-binding methyltransferase superfamily. RNA methyltransferase TrmH family. TrmL subfamily. In terms of assembly, homodimer.

Its subcellular location is the cytoplasm. It carries out the reaction cytidine(34) in tRNA + S-adenosyl-L-methionine = 2'-O-methylcytidine(34) in tRNA + S-adenosyl-L-homocysteine + H(+). The catalysed reaction is 5-carboxymethylaminomethyluridine(34) in tRNA(Leu) + S-adenosyl-L-methionine = 5-carboxymethylaminomethyl-2'-O-methyluridine(34) in tRNA(Leu) + S-adenosyl-L-homocysteine + H(+). Its function is as follows. Methylates the ribose at the nucleotide 34 wobble position in the two leucyl isoacceptors tRNA(Leu)(CmAA) and tRNA(Leu)(cmnm5UmAA). Catalyzes the methyl transfer from S-adenosyl-L-methionine to the 2'-OH of the wobble nucleotide. The chain is tRNA (cytidine(34)-2'-O)-methyltransferase from Ancylobacter novellus (strain ATCC 8093 / DSM 506 / JCM 20403 / CCM 1077 / IAM 12100 / NBRC 12443 / NCIMB 10456) (Starkeya novella).